Here is a 414-residue protein sequence, read N- to C-terminus: Tyrosine--tRNA ligase (414 aa).

Tyr-40 provides a ligand contact to L-tyrosine. A 'HIGH' region motif is present at residues 45–54; the sequence is ATAASLHVGH. Tyr-175 and Gln-179 together coordinate L-tyrosine. A 'KMSKS' region motif is present at residues 235–239; the sequence is KMGKS. An ATP-binding site is contributed by Lys-238. One can recognise an S4 RNA-binding domain in the interval 349 to 414; sequence LTVVQLLAQT…KKKHRMVQLG (66 aa).

Belongs to the class-I aminoacyl-tRNA synthetase family. TyrS type 1 subfamily. Homodimer.

The protein resides in the cytoplasm. It carries out the reaction tRNA(Tyr) + L-tyrosine + ATP = L-tyrosyl-tRNA(Tyr) + AMP + diphosphate + H(+). Catalyzes the attachment of tyrosine to tRNA(Tyr) in a two-step reaction: tyrosine is first activated by ATP to form Tyr-AMP and then transferred to the acceptor end of tRNA(Tyr). This Paracoccus denitrificans (strain Pd 1222) protein is Tyrosine--tRNA ligase.